A 114-amino-acid polypeptide reads, in one-letter code: Large ribosomal subunit protein uL24 (114 aa).

It belongs to the universal ribosomal protein uL24 family. Part of the 50S ribosomal subunit.

Its function is as follows. One of two assembly initiator proteins, it binds directly to the 5'-end of the 23S rRNA, where it nucleates assembly of the 50S subunit. Functionally, one of the proteins that surrounds the polypeptide exit tunnel on the outside of the subunit. The chain is Large ribosomal subunit protein uL24 from Thermomicrobium roseum (strain ATCC 27502 / DSM 5159 / P-2).